A 20-amino-acid polypeptide reads, in one-letter code: Ribulose bisphosphate carboxylase small subunit (20 aa).

This sequence belongs to the RuBisCO small chain family. Heterohexadecamer of 8 large and 8 small subunits.

Its subcellular location is the plastid. The protein resides in the chloroplast. In terms of biological role, ruBisCO catalyzes two reactions: the carboxylation of D-ribulose 1,5-bisphosphate, the primary event in carbon dioxide fixation, as well as the oxidative fragmentation of the pentose substrate in the photorespiration process. Both reactions occur simultaneously and in competition at the same active site. Although the small subunit is not catalytic it is essential for maximal activity. This Chattonella marina var. antiqua (Red tide flagellate) protein is Ribulose bisphosphate carboxylase small subunit.